We begin with the raw amino-acid sequence, 396 residues long: Elongation factor Tu (396 aa).

Residues 10–205 enclose the tr-type G domain; that stretch reads KPHVNIGTIG…AVDESIPDPV (196 aa). The interval 19 to 26 is G1; sequence GHVDHGKT. 19–26 serves as a coordination point for GTP; that stretch reads GHVDHGKT. Thr-26 contributes to the Mg(2+) binding site. A G2 region spans residues 62–66; that stretch reads GITIN. The segment at 83-86 is G3; the sequence is DAPG. Residues 83–87 and 138–141 each bind GTP; these read DAPGH and NKAD. Positions 138–141 are G4; sequence NKAD. The segment at 175 to 177 is G5; sequence SAL.

It belongs to the TRAFAC class translation factor GTPase superfamily. Classic translation factor GTPase family. EF-Tu/EF-1A subfamily. In terms of assembly, monomer.

Its subcellular location is the cytoplasm. It catalyses the reaction GTP + H2O = GDP + phosphate + H(+). Functionally, GTP hydrolase that promotes the GTP-dependent binding of aminoacyl-tRNA to the A-site of ribosomes during protein biosynthesis. The protein is Elongation factor Tu of Mycolicibacterium vanbaalenii (strain DSM 7251 / JCM 13017 / BCRC 16820 / KCTC 9966 / NRRL B-24157 / PYR-1) (Mycobacterium vanbaalenii).